We begin with the raw amino-acid sequence, 305 residues long: Tyrosine recombinase XerC (305 aa).

Residues 4-95 (ISIQELIKQW…TVKNFYKFLE (92 aa)) enclose the Core-binding (CB) domain. In terms of domain architecture, Tyr recombinase spans 116 to 298 (LLPKALSVDD…SIKHLEAVYN (183 aa)). Active-site residues include arginine 159, lysine 182, histidine 250, arginine 253, and histidine 276. Tyrosine 285 (O-(3'-phospho-DNA)-tyrosine intermediate) is an active-site residue.

It belongs to the 'phage' integrase family. XerC subfamily. In terms of assembly, forms a cyclic heterotetrameric complex composed of two molecules of XerC and two molecules of XerD.

It is found in the cytoplasm. Site-specific tyrosine recombinase, which acts by catalyzing the cutting and rejoining of the recombining DNA molecules. The XerC-XerD complex is essential to convert dimers of the bacterial chromosome into monomers to permit their segregation at cell division. It also contributes to the segregational stability of plasmids. The chain is Tyrosine recombinase XerC from Rickettsia typhi (strain ATCC VR-144 / Wilmington).